The chain runs to 86 residues: Serine protease inhibitor Kazal-type 9 (86 aa).

An N-terminal signal peptide occupies residues 1–19 (MRATAIVLLLALTLATMFS). Positions 26-86 (TKQMVDCSHY…TLKFVHFGKC (61 aa)) constitute a Kazal-like domain. 3 disulfides stabilise this stretch: cysteine 32/cysteine 68, cysteine 46/cysteine 65, and cysteine 54/cysteine 86.

Dimer. Interacts with KLK5 and KLK8. As to expression, skin. Highly expressed at sites of hyperkeratosis. Also detected in thymus, tonsils, testis, pancreas, liver, placenta and brain. Expressed at stratum granulosum and stratum corneum at palmar and plantar sites (at protein level).

The protein resides in the secreted. In terms of biological role, serine protease inhibitor which specifically inhibits KLK5. May contribute to the regulation of the desquamation process in skin by inhibiting KLK5. This chain is Serine protease inhibitor Kazal-type 9 (SPINK9), found in Homo sapiens (Human).